Reading from the N-terminus, the 389-residue chain is MANGADRLDLDGKPIKPMTICMIGAGGFIGSHLCEKLMTETPHKVLALDVYNDKIKHLLEPDTVQWAGRIQFHRINIKHDSRLEGLIKMADLTINLAAICTPADYNTRPLDTIYSNFIDALPVVKYCSENNKRLIHFSTCEVYGKTIGSFLPKDHPLRQDPEFYVLKEDISPCIFGSIEKQRWSYACAKQLIERLVYAEGAENGLEFTIVRPFNWIGPRMDFIPGIDGPSEGVPRVLACFSNNLLRREPLKLVDGGESQRTFIYIKDAIEAVLLMIENPERANGHIFNVGNPNNEVTVRQLAEMMTEVYAKVSGETAIESPTIDVSSKEFYGEGYDDSDKRIPDMTIINRQLGWNPKTSLWDLLESTLTYQHTTYAEAIKKATSKPVAS.

NAD(+) contacts are provided by Phe-28, Ile-29, Asp-49, Asn-76, Ile-77, and Leu-96. Tyr-105, Thr-139, Glu-141, Arg-182, and Tyr-185 together coordinate UDP-alpha-D-glucuronate. Residues Tyr-185 and Lys-189 each coordinate NAD(+). The active-site Proton acceptor is Tyr-185. Asn-214 is a UDP-alpha-D-glucuronate binding site. NAD(+) is bound by residues Trp-215 and Arg-235. 7 residues coordinate UDP-alpha-D-glucuronate: Lys-251, Val-253, Arg-260, Tyr-331, Tyr-335, Asp-337, and Arg-341.

It belongs to the NAD(P)-dependent epimerase/dehydratase family. Homodimer and heterodimer with AXS1. NAD(+) is required as a cofactor. As to expression, widely expressed with stronger expression in dark-grown seedlings, leaves and stems, and lower levels in flowers, siliques, pistils, pollen and roots.

It is found in the cytoplasm. The enzyme catalyses UDP-alpha-D-glucuronate + H(+) = UDP-alpha-D-xylose + CO2. It catalyses the reaction UDP-alpha-D-glucuronate + H(+) = UDP-alpha-D-apiose + CO2. Together with AXS1, catalyzes the conversion of UDP-D-glucuronate into a mixture of UDP-D-apiose (UDP-Api) as the main product and UDP-D-xylose to a lesser extent, via a cycle of oxidation and reduction. D-Apiose (3-C-hydroxymethyl-d-erythrose) is the only plant cell wall monosaccharide with a branched carbon skeleton and is found in rhamnogalacturonan II (RG-II), apiogalacturonan, and several apioglycosides. This chain is UDP-D-apiose/UDP-D-xylose synthase 2, found in Arabidopsis thaliana (Mouse-ear cress).